The sequence spans 85 residues: Small ribosomal subunit protein uS17 (85 aa).

This sequence belongs to the universal ribosomal protein uS17 family. Part of the 30S ribosomal subunit.

One of the primary rRNA binding proteins, it binds specifically to the 5'-end of 16S ribosomal RNA. This is Small ribosomal subunit protein uS17 from Haemophilus influenzae (strain 86-028NP).